A 390-amino-acid polypeptide reads, in one-letter code: LIM/homeobox protein Lhx4 (390 aa).

LIM zinc-binding domains lie at 28 to 87 and 88 to 150; these read PQCA…RFGT and KCTA…AKQN. The segment at residues 157–216 is a DNA-binding region (homeobox); sequence AKRPRTTITAKQLETLKNAYKNSPKPARHVREQLSSETGLDMRVVQVWFQNRRAKEKRLK. Positions 161 to 181 are interaction with DNA; the sequence is RTTITAKQLETLKNAYKNSPK. Residues 199 to 211 form an interaction with 5-mCpG DNA region; the sequence is RVVQVWFQNRRAK. 2 disordered regions span residues 231–253 and 355–390; these read VKRS…GVSD and MAGG…HPPF.

Transient expression in ventrolateral regions of the developing neural tube and hindbrain.

It is found in the nucleus. May play a critical role in the development of respiratory control mechanisms and in the normal growth and maturation of the lung. Binds preferentially to methylated DNA. This Mus musculus (Mouse) protein is LIM/homeobox protein Lhx4 (Lhx4).